A 321-amino-acid chain; its full sequence is Coproporphyrin III ferrochelatase (321 aa).

Positions 185 and 267 each coordinate Fe(2+).

The protein belongs to the ferrochelatase family.

Its subcellular location is the cytoplasm. It carries out the reaction Fe-coproporphyrin III + 2 H(+) = coproporphyrin III + Fe(2+). It functions in the pathway porphyrin-containing compound metabolism; protoheme biosynthesis. In terms of biological role, involved in coproporphyrin-dependent heme b biosynthesis. Catalyzes the insertion of ferrous iron into coproporphyrin III to form Fe-coproporphyrin III. This Lacticaseibacillus casei (strain BL23) (Lactobacillus casei) protein is Coproporphyrin III ferrochelatase.